We begin with the raw amino-acid sequence, 74 residues long: Hadrucalcin (74 aa).

An N-terminal signal peptide occupies residues 1–27; sequence MKTSSLTIIFIAVIITIICLNIHDIEA. Residues 28–39 constitute a propeptide that is removed on maturation; that stretch reads REIEFNAGRVVR. 3 disulfide bridges follow: cysteine 44–cysteine 58, cysteine 51–cysteine 62, and cysteine 57–cysteine 73. The essential for stimulation of [3H]ryanodine binding to RYR1 stretch occupies residues 64–65; sequence RR.

Expressed by the venom gland.

It is found in the secreted. Its function is as follows. This toxin activates ryanodine receptors RyR1 and RyR2 by inducing a long-lasting subconductance state (35% of the full conductance stateon RyR1). Furthermore, it triggers calcium release from sarcoplasmic vesicles (11.8 nM are enough to induce a sharp release on RyR1, and 55% of the total calcium is released after toxin (100 nM) addition on RyR1) probably by acting as a cell-penetrating peptide (CPP). In addition, it has been shown to dose-dependently stimulate ryanodine binding to RyR1 (EC(50)=14.8 nM). It also augments the bell-shaped calcium-[3H]ryanodine binding curve that is maximal at about 10 uM calcium concentration. It binds a different site as ryanodine. It acts synergistically with caffeine. In vivo, intracerebroventricular injection into mice induces neurotoxic symptoms, followed by death. The sequence is that of Hadrucalcin from Hoffmannihadrurus gertschi (Scorpion).